Here is a 363-residue protein sequence, read N- to C-terminus: Histidinol-phosphate aminotransferase (363 aa).

N6-(pyridoxal phosphate)lysine is present on K218.

The protein belongs to the class-II pyridoxal-phosphate-dependent aminotransferase family. Histidinol-phosphate aminotransferase subfamily. Homodimer. The cofactor is pyridoxal 5'-phosphate.

It carries out the reaction L-histidinol phosphate + 2-oxoglutarate = 3-(imidazol-4-yl)-2-oxopropyl phosphate + L-glutamate. It participates in amino-acid biosynthesis; L-histidine biosynthesis; L-histidine from 5-phospho-alpha-D-ribose 1-diphosphate: step 7/9. In Xanthomonas oryzae pv. oryzae (strain MAFF 311018), this protein is Histidinol-phosphate aminotransferase.